A 413-amino-acid polypeptide reads, in one-letter code: Tyrosine--tRNA ligase (413 aa).

The 'HIGH' region motif lies at 59-68 (PTAPDIHLGH). The 'KMSKS' region signature appears at 243–247 (KMSKS). Lysine 246 contributes to the ATP binding site. Residues 351-411 (LAIGQLLKQA…GKRRFARVTL (61 aa)) enclose the S4 RNA-binding domain.

Belongs to the class-I aminoacyl-tRNA synthetase family. TyrS type 2 subfamily. Homodimer.

It is found in the cytoplasm. The enzyme catalyses tRNA(Tyr) + L-tyrosine + ATP = L-tyrosyl-tRNA(Tyr) + AMP + diphosphate + H(+). Functionally, catalyzes the attachment of tyrosine to tRNA(Tyr) in a two-step reaction: tyrosine is first activated by ATP to form Tyr-AMP and then transferred to the acceptor end of tRNA(Tyr). This chain is Tyrosine--tRNA ligase, found in Burkholderia thailandensis (strain ATCC 700388 / DSM 13276 / CCUG 48851 / CIP 106301 / E264).